The chain runs to 501 residues: Proline--tRNA ligase (501 aa).

It belongs to the class-II aminoacyl-tRNA synthetase family.

The catalysed reaction is tRNA(Pro) + L-proline + ATP = L-prolyl-tRNA(Pro) + AMP + diphosphate. The chain is Proline--tRNA ligase from Encephalitozoon cuniculi (strain GB-M1) (Microsporidian parasite).